The primary structure comprises 627 residues: Sister chromatid cohesion 1 protein 1 (627 aa).

Disordered stretches follow at residues 211-294 (GDDE…TATS), 395-416 (MHNHHQTDHHERSDTSSQNLDS), and 461-510 (GDDV…VAEE). Basic and acidic residues-rich tracts occupy residues 254 to 263 (EQQENRRDGF), 272 to 282 (IPDKEEHDRPQ), and 395 to 408 (MHNHHQTDHHERSD). Residues 467–487 (MPSTPSARGAASINNIEISSK) are compositionally biased toward polar residues.

This sequence belongs to the rad21 family. In terms of assembly, component of the cohesin complex. Isoform 2 is expressed at low levels in buds, leaves and roots, whereas expression of isoform 1 is confined to buds.

The protein localises to the nucleus. Functionally, involved in chromosome condensation, pairing and segregation during meiosis. Responsible for cohesion between replicated sister chromatids. The polypeptide is Sister chromatid cohesion 1 protein 1 (SYN1) (Arabidopsis thaliana (Mouse-ear cress)).